A 271-amino-acid polypeptide reads, in one-letter code: Thiazole synthase (271 aa).

Lys-104 (schiff-base intermediate with DXP) is an active-site residue. 1-deoxy-D-xylulose 5-phosphate is bound by residues Gly-165, 192–193 (AG), and 214–215 (NT).

It belongs to the ThiG family. In terms of assembly, homotetramer. Forms heterodimers with either ThiH or ThiS.

The protein localises to the cytoplasm. It catalyses the reaction [ThiS sulfur-carrier protein]-C-terminal-Gly-aminoethanethioate + 2-iminoacetate + 1-deoxy-D-xylulose 5-phosphate = [ThiS sulfur-carrier protein]-C-terminal Gly-Gly + 2-[(2R,5Z)-2-carboxy-4-methylthiazol-5(2H)-ylidene]ethyl phosphate + 2 H2O + H(+). The protein operates within cofactor biosynthesis; thiamine diphosphate biosynthesis. Functionally, catalyzes the rearrangement of 1-deoxy-D-xylulose 5-phosphate (DXP) to produce the thiazole phosphate moiety of thiamine. Sulfur is provided by the thiocarboxylate moiety of the carrier protein ThiS. In vitro, sulfur can be provided by H(2)S. The polypeptide is Thiazole synthase (Burkholderia thailandensis (strain ATCC 700388 / DSM 13276 / CCUG 48851 / CIP 106301 / E264)).